The primary structure comprises 281 residues: Sorbose reductase SOU1 (281 aa).

Residues Ile47, Lys74, and Asn119 each coordinate NADP(+). Catalysis depends on proton donor residues Ser173 and Tyr188. 4 residues coordinate NADP(+): Tyr188, Lys192, Ile221, and Thr223. Lys192 (lowers pKa of active site Tyr) is an active-site residue.

The protein belongs to the short-chain dehydrogenases/reductases (SDR) family. As to quaternary structure, homotetramer.

It carries out the reaction D-sorbitol + NADP(+) = keto-L-sorbose + NADPH + H(+). The protein operates within carbohydrate degradation; L-sorbose degradation. Functionally, catalyzes the NADP dependent reduction of L-sorbose to D-glucitol. Can also convert fructose to mannitol, but less efficiently. This Candida albicans (strain SC5314 / ATCC MYA-2876) (Yeast) protein is Sorbose reductase SOU1 (SOU1).